The following is a 310-amino-acid chain: tRNA uridine(34) hydroxylase (310 aa).

One can recognise a Rhodanese domain in the interval 134-232; it reads DDPDTLLIDT…YFEEVSQSES (99 aa). Cysteine 192 serves as the catalytic Cysteine persulfide intermediate.

It belongs to the TrhO family.

The catalysed reaction is uridine(34) in tRNA + AH2 + O2 = 5-hydroxyuridine(34) in tRNA + A + H2O. Functionally, catalyzes oxygen-dependent 5-hydroxyuridine (ho5U) modification at position 34 in tRNAs. The chain is tRNA uridine(34) hydroxylase from Prochlorococcus marinus (strain MIT 9303).